The sequence spans 322 residues: ATP-dependent 6-phosphofructokinase 1 (322 aa).

Gly-11 contacts ATP. Position 21 to 25 (21 to 25 (RAVVR)) interacts with ADP. Residues 72–73 (RS) and 102–105 (GDGT) each bind ATP. Asp-103 is a binding site for Mg(2+). 126–128 (TID) contributes to the substrate binding site. Asp-128 acts as the Proton acceptor in catalysis. Arg-155 provides a ligand contact to ADP. Substrate is bound by residues Arg-163 and 170-172 (MGR). ADP contacts are provided by residues 186–188 (GAE), Arg-212, and 214–216 (KKS). Substrate-binding positions include Glu-223, Arg-246, and 252-255 (HIQR).

The protein belongs to the phosphofructokinase type A (PFKA) family. ATP-dependent PFK group I subfamily. Prokaryotic clade 'B1' sub-subfamily. Homotetramer. It depends on Mg(2+) as a cofactor.

It is found in the cytoplasm. It carries out the reaction beta-D-fructose 6-phosphate + ATP = beta-D-fructose 1,6-bisphosphate + ADP + H(+). The protein operates within carbohydrate degradation; glycolysis; D-glyceraldehyde 3-phosphate and glycerone phosphate from D-glucose: step 3/4. With respect to regulation, allosterically activated by ADP and other diphosphonucleosides. Allosterically inhibited by phosphoenolpyruvate which induces the dissociation of the active tetramer into an inactive two-subunit forms. Its function is as follows. Catalyzes the phosphorylation of D-fructose 6-phosphate to fructose 1,6-bisphosphate by ATP, the first committing step of glycolysis. This Thermus thermophilus (strain ATCC 27634 / DSM 579 / HB8) protein is ATP-dependent 6-phosphofructokinase 1.